The primary structure comprises 292 residues: NAD kinase (292 aa).

Residue aspartate 73 is the Proton acceptor of the active site. Residues 73–74 (DG), 147–148 (NE), histidine 158, arginine 175, aspartate 177, 188–193 (TAYSLS), and glutamine 247 contribute to the NAD(+) site.

This sequence belongs to the NAD kinase family. A divalent metal cation serves as cofactor.

The protein localises to the cytoplasm. It carries out the reaction NAD(+) + ATP = ADP + NADP(+) + H(+). Its function is as follows. Involved in the regulation of the intracellular balance of NAD and NADP, and is a key enzyme in the biosynthesis of NADP. Catalyzes specifically the phosphorylation on 2'-hydroxyl of the adenosine moiety of NAD to yield NADP. In Erwinia tasmaniensis (strain DSM 17950 / CFBP 7177 / CIP 109463 / NCPPB 4357 / Et1/99), this protein is NAD kinase.